The sequence spans 742 residues: mRNA export factor ICP27 homolog (742 aa).

Residues 1-11 (MELHSRGRHDA) are compositionally biased toward basic and acidic residues. The interval 1-202 (MELHSRGRHD…NHHGSSAGPQ (202 aa)) is disordered. The span at 72 to 85 (SHHHRPCVPARRPR) shows a compositional bias: basic residues. The segment covering 153–171 (KSYDNDDGEPHHHGGDSTH) has biased composition (basic and acidic residues). Positions 179-202 (CPTTFGSSHPSSANNHHGSSAGPQ) are enriched in polar residues. Cysteine 387, histidine 494, cysteine 496, and cysteine 501 together coordinate Zn(2+). Residues 387–501 (CILDHQDGWG…QCHECQNEMC (115 aa)) form a CHC2-type zinc finger. Positions 540 to 742 (ASNHATAGGQ…MLCYSDDMDD (203 aa)) are disordered. Residues 578-587 (YDKKDREGSH) are compositionally biased toward basic and acidic residues. The span at 614–626 (GELEEDEDSDDAS) shows a compositional bias: acidic residues. Positions 692–703 (QSANGNHSTTAT) are enriched in polar residues.

This sequence belongs to the HHV-1 ICP27 protein family. Self-associates and forms high-molecular-mass complexes. Interacts with host DDX39A and DDX39B; these interactions are required for UL69 function in mRNA export. Interacts with host SUPT6H, EIF4A1 and PABPC1. Post-translationally, phosphorylated by UL97 and host CDK1, CDK7 and CD9. Phosphorylation by CDKs impacts on UL69 nuclear localization and activity.

It is found in the virion tegument. It localises to the virion. Its subcellular location is the host nucleus. The protein localises to the host cytoplasm. Its function is as follows. Immediate early (EI) protein that plays many roles during productive infection including regulation of host cell cycle progression, regulation of viral gene expression or nuclear export of intronless viral RNAs. Acts as a transcriptional transactivator via interaction with the cellular transcription elongation factor SUPT6H and as a nuclear RNA export factor via interaction with UAP56, a component of the cellular mRNA export machinery. The chain is mRNA export factor ICP27 homolog from Human cytomegalovirus (strain Merlin) (HHV-5).